Here is a 172-residue protein sequence, read N- to C-terminus: Ribosome maturation factor RimM (172 aa).

Residues 94-167 (EGSYYYKDII…VAHVIVPEGL (74 aa)) form the PRC barrel domain.

This sequence belongs to the RimM family. As to quaternary structure, binds ribosomal protein uS19.

The protein localises to the cytoplasm. Functionally, an accessory protein needed during the final step in the assembly of 30S ribosomal subunit, possibly for assembly of the head region. Essential for efficient processing of 16S rRNA. May be needed both before and after RbfA during the maturation of 16S rRNA. It has affinity for free ribosomal 30S subunits but not for 70S ribosomes. The sequence is that of Ribosome maturation factor RimM from Lacticaseibacillus paracasei (strain ATCC 334 / BCRC 17002 / CCUG 31169 / CIP 107868 / KCTC 3260 / NRRL B-441) (Lactobacillus paracasei).